Reading from the N-terminus, the 149-residue chain is Calmodulin (149 aa).

The residue at position 2 (Ala2) is an N-acetylalanine. EF-hand domains lie at 8 to 43, 44 to 79, 81 to 116, and 117 to 149; these read EQVSEYKEAFSLFDKDGDGQITTKELGTVMRSLGQN, PSESELQDMINEVDADNNGTIDFPEFLTMMARKMKD, DSEEEIREAFKVFDRDNNGFISAAELRHVMTSIGEK, and LTDDEVDEMIREADQDGDGRIDYNEFVQLMMQK. The Ca(2+) site is built by Asp21, Asp23, Asp25, Gln27, Glu32, Asp57, Asp59, Asn61, Thr63, Glu68, Asp94, Asp96, Asn98, Glu105, Asp130, Asp132, Asp134, Arg136, and Glu141.

It belongs to the calmodulin family.

In terms of biological role, calmodulin mediates the control of a large number of enzymes, ion channels and other proteins by Ca(2+). Among the enzymes to be stimulated by the calmodulin-Ca(2+) complex are a number of protein kinases and phosphatases. The protein is Calmodulin (camA) of Emericella nidulans (strain FGSC A4 / ATCC 38163 / CBS 112.46 / NRRL 194 / M139) (Aspergillus nidulans).